The following is a 215-amino-acid chain: Ribose-5-phosphate isomerase A (215 aa).

Substrate is bound by residues 26-29, 79-82, and 92-95; these read TGST, DGAD, and KGGG. The active-site Proton acceptor is the E101. Substrate is bound at residue K119.

It belongs to the ribose 5-phosphate isomerase family. Homodimer.

The enzyme catalyses aldehydo-D-ribose 5-phosphate = D-ribulose 5-phosphate. It functions in the pathway carbohydrate degradation; pentose phosphate pathway; D-ribose 5-phosphate from D-ribulose 5-phosphate (non-oxidative stage): step 1/1. Its function is as follows. Catalyzes the reversible conversion of ribose-5-phosphate to ribulose 5-phosphate. This chain is Ribose-5-phosphate isomerase A, found in Xylella fastidiosa (strain 9a5c).